Reading from the N-terminus, the 106-residue chain is NADH-quinone oxidoreductase subunit K (106 aa).

Transmembrane regions (helical) follow at residues I8 to V28, I35 to F55, and V66 to L86.

Belongs to the complex I subunit 4L family. In terms of assembly, NDH-1 is composed of 14 different subunits. Subunits NuoA, H, J, K, L, M, N constitute the membrane sector of the complex.

It is found in the cell inner membrane. It carries out the reaction a quinone + NADH + 5 H(+)(in) = a quinol + NAD(+) + 4 H(+)(out). Its function is as follows. NDH-1 shuttles electrons from NADH, via FMN and iron-sulfur (Fe-S) centers, to quinones in the respiratory chain. The immediate electron acceptor for the enzyme in this species is believed to be a menaquinone. Couples the redox reaction to proton translocation (for every two electrons transferred, four hydrogen ions are translocated across the cytoplasmic membrane), and thus conserves the redox energy in a proton gradient. The polypeptide is NADH-quinone oxidoreductase subunit K (Flavobacterium psychrophilum (strain ATCC 49511 / DSM 21280 / CIP 103535 / JIP02/86)).